Here is a 55-residue protein sequence, read N- to C-terminus: uncharacterized protein (55 aa).

This is an uncharacterized protein from Escherichia coli (Bacteriophage T4).